Reading from the N-terminus, the 181-residue chain is Bifunctional protein PyrR (181 aa).

Residues 39 to 40 (RR), 104 to 112 (DDVLYTGRT), R137, and V161 contribute to the substrate site. Positions 100 to 112 (VILVDDVLYTGRT) match the PRPP-binding motif.

The protein belongs to the purine/pyrimidine phosphoribosyltransferase family. PyrR subfamily.

It catalyses the reaction UMP + diphosphate = 5-phospho-alpha-D-ribose 1-diphosphate + uracil. In terms of biological role, regulates the transcription of the pyrimidine nucleotide (pyr) operon in response to exogenous pyrimidines. Its function is as follows. Also displays a weak uracil phosphoribosyltransferase activity which is not physiologically significant. This chain is Bifunctional protein PyrR, found in Pasteurella multocida (strain Pm70).